A 417-amino-acid chain; its full sequence is Phosphoglycerate kinase 1 (417 aa).

Ser-2 carries the post-translational modification N-acetylserine. Residues Ser-2 and Ser-4 each carry the phosphoserine modification. An N6-succinyllysine modification is found at Lys-6. The residue at position 11 (Lys-11) is an N6-acetyllysine. (2R)-3-phosphoglycerate is bound by residues Val-23, Asp-24, Phe-25, Asn-26, Gln-38, and Arg-39. Residues 38 to 43 form a mitochondrial targeting region exposed following cis-trans isomerization by PIN1 and recognized by the TOM complex for mitochondrial translocation of the protein region; it reads QRIKAA. Residue Lys-48 is modified to N6-acetyllysine; alternate. Lys-48 is subject to N6-succinyllysine; alternate. Residues Ser-62, His-63, Gly-65, and Arg-66 each coordinate (2R)-3-phosphoglycerate. Lys-75 is subject to N6-acetyllysine. Tyr-76 carries the phosphotyrosine modification. N6-acetyllysine is present on residues Lys-86 and Lys-91. Lys-97 is subject to N6-acetyllysine; alternate. The residue at position 97 (Lys-97) is an N6-(2-hydroxyisobutyryl)lysine; alternate. 2 residues coordinate (2R)-3-phosphoglycerate: Leu-122 and Arg-123. Lys-131 is modified (N6-acetyllysine; alternate). Lys-131 carries the post-translational modification N6-malonyllysine; alternate. Position 146 is an N6-acetyllysine (Lys-146). (2R)-3-phosphoglycerate-binding residues include His-170 and Arg-171. Residue Lys-191 is modified to N6-succinyllysine. The residue at position 196 (Tyr-196) is a Phosphotyrosine. An N6-acetyllysine modification is found at Lys-199. Ser-203 bears the Phosphoserine mark. Residue Gly-214 coordinates ADP. Gly-214 lines the CDP pocket. Ala-215 and Lys-216 together coordinate AMP. Ala-215 contributes to the ATP binding site. Ala-215 contributes to the Mg(2+) binding site. Lys-216 bears the N6-(2-hydroxyisobutyryl)lysine mark. The Mg(2+) site is built by Ala-218 and Asp-219. Asp-219 provides a ligand contact to CDP. Lys-220 provides a ligand contact to AMP. Lys-220 is a binding site for ATP. Lys-220 bears the N6-(2-hydroxyisobutyryl)lysine mark. Gly-238 lines the ADP pocket. Residue Gly-238 participates in CDP binding. An AMP-binding site is contributed by Gly-239. Gly-239 provides a ligand contact to ATP. Lys-267 and Lys-291 each carry N6-acetyllysine. AMP is bound at residue Gly-313. Residue Gly-313 participates in ATP binding. Lys-323 is subject to N6-(2-hydroxyisobutyryl)lysine. Residues Gly-338, Val-340, and Phe-343 each contribute to the CDP site. Position 343 (Phe-343) interacts with ADP. An AMP-binding site is contributed by Glu-344. Glu-344 provides a ligand contact to ATP. Position 361 is an N6-acetyllysine (Lys-361). ATP is bound by residues Asp-375 and Thr-376. Residue Asp-375 participates in Mg(2+) binding.

Belongs to the phosphoglycerate kinase family. In terms of assembly, monomer. Interacts with kinase MAPK1/ERK2; the interaction is direct, occurs under hypoxic conditions, and promotes its interaction with PIN1. Interacts with peptidyl-prolyl cis-trans isomerase PIN1; the interaction is direct, occurs under hypoxic conditions, and targets the protein to the mitochondrion by promoting interactions with the TOM complex. Interacts with mitochondrial circRNA mcPGK1 (via its 2nd stem-loop); the interaction is direct and targets the protein to the mitochondrion by promoting interactions with the TOM complex. Interacts with pyruvate dehydrogenase kinase PDK1; the interaction is direct, occurs under hypoxic conditions and leads to PDK1-mediated inhibition of pyruvate dehydrogenase complex activity. Mg(2+) serves as cofactor. Phosphorylated at Ser-203 by MAPK1/ERK2 under hypoxic conditions, which promotes its mitochondrial targeting.

The protein resides in the cytoplasm. Its subcellular location is the cytosol. The protein localises to the mitochondrion matrix. It catalyses the reaction (2R)-3-phosphoglycerate + ATP = (2R)-3-phospho-glyceroyl phosphate + ADP. It carries out the reaction L-seryl-[protein] + ATP = O-phospho-L-seryl-[protein] + ADP + H(+). It participates in carbohydrate degradation; glycolysis; pyruvate from D-glyceraldehyde 3-phosphate: step 2/5. Its function is as follows. Catalyzes one of the two ATP producing reactions in the glycolytic pathway via the reversible conversion of 1,3-diphosphoglycerate to 3-phosphoglycerate. Both L- and D- forms of purine and pyrimidine nucleotides can be used as substrates, but the activity is much lower on pyrimidines. In addition to its role as a glycolytic enzyme, it seems that PGK-1 acts as a polymerase alpha cofactor protein (primer recognition protein). Acts as a protein kinase when localized to the mitochondrion where it phosphorylates pyruvate dehydrogenase kinase PDK1 to inhibit pyruvate dehydrogenase complex activity and suppress the formation of acetyl-coenzyme A from pyruvate, and consequently inhibit oxidative phosphorylation and promote glycolysis. May play a role in sperm motility. The polypeptide is Phosphoglycerate kinase 1 (PGK1) (Sus scrofa (Pig)).